Consider the following 527-residue polypeptide: MKKLLAMFFCLSVVVSAPLAMAEDAKTTEKTTDVVLIGGGIMSSTLGVYLQELQPDWSIDMVERMDNVAEESSNGWNNAGTGHSAFMELNYTPDNPDGPINISKALEITEAFEISRQFWSYQVKNGVLNNPHAFINSVPHISFVWGDENTAFLKHRYDAMQHSTLYRGMEFSDDPNTIKEWVPLVMEGRDPAQKIAATRMPIGTDVNYGEITRQLVSAMKTKSNFALHLNSEVRDIKRNADNTWSVTYADLKNGEKESVIKAKFVFIGAGGAALKLLQKSGIPEADLYGGFPVGGEFLVTENPEIVKRHMAKVYGKASVGAPPMSVPHLDTRIFDGKPVLLFGPFATFSSKFLKNGSLWDLIGSVTFSNVMPMTHVGLDNFDLVKYLVSQVMMDDDDRFASLQEYFPNAKKEDWRLTVAGQRVQVIKKDDDKGGVLKLGTEIVSSQDGSIAALLGASPGASTAAPIMLSLLEKVFKDKVATPEWQSKLKEIVPSYGQKLDGNIEMTNKIRSYTSSTLGLDYIEVKPE.

The protein belongs to the MQO family. Requires FAD as cofactor.

The catalysed reaction is (S)-malate + a quinone = a quinol + oxaloacetate. It functions in the pathway carbohydrate metabolism; tricarboxylic acid cycle; oxaloacetate from (S)-malate (quinone route): step 1/1. The chain is Probable malate:quinone oxidoreductase from Pectobacterium atrosepticum (strain SCRI 1043 / ATCC BAA-672) (Erwinia carotovora subsp. atroseptica).